The sequence spans 278 residues: Dermonecrotic toxin LspiSicTox-betaIE2iii (278 aa).

The active site involves His-5. Residues Glu-25 and Asp-27 each contribute to the Mg(2+) site. His-41 acts as the Nucleophile in catalysis. Disulfide bonds link Cys-45/Cys-51 and Cys-47/Cys-190. Asp-85 serves as a coordination point for Mg(2+).

Belongs to the arthropod phospholipase D family. Class II subfamily. It depends on Mg(2+) as a cofactor. In terms of tissue distribution, expressed by the venom gland.

Its subcellular location is the secreted. It catalyses the reaction an N-(acyl)-sphingosylphosphocholine = an N-(acyl)-sphingosyl-1,3-cyclic phosphate + choline. The catalysed reaction is an N-(acyl)-sphingosylphosphoethanolamine = an N-(acyl)-sphingosyl-1,3-cyclic phosphate + ethanolamine. The enzyme catalyses a 1-acyl-sn-glycero-3-phosphocholine = a 1-acyl-sn-glycero-2,3-cyclic phosphate + choline. It carries out the reaction a 1-acyl-sn-glycero-3-phosphoethanolamine = a 1-acyl-sn-glycero-2,3-cyclic phosphate + ethanolamine. In terms of biological role, dermonecrotic toxins cleave the phosphodiester linkage between the phosphate and headgroup of certain phospholipids (sphingolipid and lysolipid substrates), forming an alcohol (often choline) and a cyclic phosphate. This toxin acts on sphingomyelin (SM). It may also act on ceramide phosphoethanolamine (CPE), lysophosphatidylcholine (LPC) and lysophosphatidylethanolamine (LPE), but not on lysophosphatidylserine (LPS), and lysophosphatidylglycerol (LPG). It acts by transphosphatidylation, releasing exclusively cyclic phosphate products as second products. Induces dermonecrosis, hemolysis, increased vascular permeability, edema, inflammatory response, and platelet aggregation. The sequence is that of Dermonecrotic toxin LspiSicTox-betaIE2iii from Loxosceles spinulosa (Recluse spider).